We begin with the raw amino-acid sequence, 763 residues long: Glycerophosphodiester phosphodiesterase GDPDL1 (763 aa).

The N-terminal stretch at 1-35 is a signal peptide; it reads MNSRPSNPTKLVIRSSTLLFCGVVLIHLFAAQIDA. Topologically, residues 36–744 are extracellular; the sequence is QRSTSRWQTL…STIAQAPSGQ (709 aa). The region spanning 50–350 is the GP-PDE 1 domain; sequence PLVIARGGFS…DFPITASAAV (301 aa). N-linked (GlcNAc...) asparagine glycosylation is found at asparagine 105, asparagine 192, asparagine 248, asparagine 257, asparagine 315, asparagine 359, asparagine 430, asparagine 534, asparagine 547, and asparagine 654. One can recognise a GP-PDE 2 domain in the interval 366 to 668; that stretch reads FLVISKDGAS…EFPFTAARYK (303 aa). The helical transmembrane segment at 745-762 threads the bilayer; that stretch reads TRLKLSLLLSVFFLSLLL. A topological domain (cytoplasmic) is located at residue leucine 763.

It belongs to the glycerophosphoryl diester phosphodiesterase family. Ca(2+) serves as cofactor. In terms of tissue distribution, expressed in rosette and cauline leaves, stems, flowers and siliques.

The protein resides in the cell membrane. The catalysed reaction is a sn-glycero-3-phosphodiester + H2O = an alcohol + sn-glycerol 3-phosphate + H(+). Functionally, hydrolyzes glycerolphosphoglycerol, glycerophosphocholine and glycerophosphoethanolamine in vitro. This chain is Glycerophosphodiester phosphodiesterase GDPDL1, found in Arabidopsis thaliana (Mouse-ear cress).